The following is a 181-amino-acid chain: TETTSFSITKFGPDQQNLIFQGDGYTTKERLTLTKAVRNTVGRALYSSPIHIWDSKTGNVANFVTSFTFVIDAPNSYNVADGFTFFIAPVDTKPQTGGGYLGVFNSKDYDKTSQTVAVEFDTFYNTAWDPSNGDRHIGIDVNSIKSINTKSWKLQNGKEANVVIAFNAATNVLTVSLTYPN.

The Mn(2+) site is built by glutamate 119 and aspartate 121. Residues aspartate 121, phenylalanine 123, asparagine 125, and aspartate 129 each contribute to the Ca(2+) site. Positions 129 and 136 each coordinate Mn(2+).

This sequence belongs to the leguminous lectin family. Tetramer of two alpha and two beta chains.

This chain is Lectin beta-1 and beta-2 chains, found in Lathyrus ochrus (Cyprus-vetch).